Here is a 377-residue protein sequence, read N- to C-terminus: Cobalt-precorrin-5B C(1)-methyltransferase (377 aa).

The protein belongs to the CbiD family.

The catalysed reaction is Co-precorrin-5B + S-adenosyl-L-methionine = Co-precorrin-6A + S-adenosyl-L-homocysteine. It participates in cofactor biosynthesis; adenosylcobalamin biosynthesis; cob(II)yrinate a,c-diamide from sirohydrochlorin (anaerobic route): step 6/10. Functionally, catalyzes the methylation of C-1 in cobalt-precorrin-5B to form cobalt-precorrin-6A. This chain is Cobalt-precorrin-5B C(1)-methyltransferase, found in Alkaliphilus metalliredigens (strain QYMF).